The following is a 944-amino-acid chain: UvrABC system protein A (944 aa).

33–40 (GLSGSGKS) is a binding site for ATP. The segment at 252-279 (CPICGFSIGELEPRMFSFNSPFGACPTC) adopts a C4-type zinc-finger fold. ABC transporter domains follow at residues 309–587 (WEPT…KKSL) and 607–935 (ITDR…QYLK). An ATP-binding site is contributed by 639–646 (GVSGSGKS). Residues 738–764 (CEACKGDGIIKIEMHFLPDVYVPCEVC) form a C4-type zinc finger.

It belongs to the ABC transporter superfamily. UvrA family. Forms a heterotetramer with UvrB during the search for lesions.

It is found in the cytoplasm. Functionally, the UvrABC repair system catalyzes the recognition and processing of DNA lesions. UvrA is an ATPase and a DNA-binding protein. A damage recognition complex composed of 2 UvrA and 2 UvrB subunits scans DNA for abnormalities. When the presence of a lesion has been verified by UvrB, the UvrA molecules dissociate. The chain is UvrABC system protein A from Staphylococcus epidermidis (strain ATCC 12228 / FDA PCI 1200).